Consider the following 945-residue polypeptide: Protein translocase subunit SecA (945 aa).

ATP is bound by residues Gln-90, 108 to 112 (GEGKT), and Asp-509. Residues 533–568 (VKPEDGHKPPVPLQRRSESSGFGEDKDVTTDNSKPL) form a disordered region. The segment covering 547-561 (RRSESSGFGEDKDVT) has biased composition (basic and acidic residues).

It belongs to the SecA family. In terms of assembly, monomer and homodimer. Part of the essential Sec protein translocation apparatus which comprises SecA, SecYEG and auxiliary proteins SecDF. Other proteins may also be involved.

Its subcellular location is the cell inner membrane. It is found in the cellular thylakoid membrane. The protein localises to the cytoplasm. It catalyses the reaction ATP + H2O + cellular proteinSide 1 = ADP + phosphate + cellular proteinSide 2.. In terms of biological role, part of the Sec protein translocase complex. Interacts with the SecYEG preprotein conducting channel. Has a central role in coupling the hydrolysis of ATP to the transfer of proteins into and across the cell membrane, serving as an ATP-driven molecular motor driving the stepwise translocation of polypeptide chains across the membrane. Its function is as follows. Probably participates in protein translocation into and across both the cytoplasmic and thylakoid membranes in cyanobacterial cells. The sequence is that of Protein translocase subunit SecA from Prochlorococcus marinus (strain MIT 9211).